A 616-amino-acid chain; its full sequence is Chaperone protein HtpG (616 aa).

Positions 1-334 (MAEKQIHTFQ…TADLPLNVSR (334 aa)) are a; substrate-binding. Positions 335–549 (EILQGNKVVD…ENEMGGNMER (215 aa)) are b. Residues 550–616 (IMKSLGQDVP…FVKRINKLIN (67 aa)) form a c region.

This sequence belongs to the heat shock protein 90 family. Homodimer.

The protein resides in the cytoplasm. Functionally, molecular chaperone. Has ATPase activity. The protein is Chaperone protein HtpG of Ruthia magnifica subsp. Calyptogena magnifica.